Reading from the N-terminus, the 220-residue chain is Iron-sulfur flavoprotein AF_1436 (220 aa).

[4Fe-4S] cluster-binding residues include C47, C50, C53, and C59.

This sequence belongs to the SsuE family. Isf subfamily. Homodimer. FMN serves as cofactor. It depends on [4Fe-4S] cluster as a cofactor.

Functionally, redox-active protein probably involved in electron transport. The sequence is that of Iron-sulfur flavoprotein AF_1436 from Archaeoglobus fulgidus (strain ATCC 49558 / DSM 4304 / JCM 9628 / NBRC 100126 / VC-16).